A 1637-amino-acid polypeptide reads, in one-letter code: MSNRGNLNLNLPPSSGKYTVGENVHFELSKEKNNSTNSNPHTSSTSTSNSNNTGIGVAKSLSTNDNNNDNDNQQPQQHEQIQSKAKSQSQSQSQSQSQPQTQVQVEQQQQQQSLVNSPAAQLAAKKRKKKKSKKSSNNNGNNSNTNSNSNSEITNTSISMPHAFLNNPDEDYPTSRVIKQAPNGDVIVESLDHVGGTYEDHLHDDYSDEDTLHHHLRQAPHQASNNNHIHNHSHTSSHPLQHTPNHLHHASHNANPLTQHISASGASMRSHGHNDAHSNLWDSASLEEQEKLKEFWESLEESQKLDLVKIDKQSIMKMFKNETRQHLQQLLQNGVLNNQNASSSNNCACKYCGRRNNIIEEELENIYDNHFDDIIDFIHEVRDINDLNALPGLLFGGFHMLEEERRLQKRKQLHNEHLELAKSSNLQNQAHIEEIRAQMDKLKMNQRQQSQSQSQSQSQQQRDVQTAQSQVLSKDSSLKNANTSMNKQHTSQQLLQPQIQAQGKNNLQQNHHTHHHHQQPLQHPTVQISATFLSSNPTETQLFNKLLDPKLFEALESLDLQKMKEVSHFDPQNTAHINMLEKAGSLREIVRDLHNVDRNHLEKGMSYVQNMGKLFSNIASLNPSNPEDAEKIMTGQLNEQFNQGLSTFAEDLLKNDGSSFISMMETLSELRSAREELLKEKTPYNGLLTKTPAATSQDREQQVQPNHSHWLDEDDHDHEHEHEHEHEHEHEIDDEDHEHYCCHHHQHHHLHGDEEYDEEDEEDDEEYEYGDDEEEEDEEDEEEGEDEELEEVVEDDVDEEILDDEEEFDAKNASDTESEISEEEKMQEIRRLFLIQVIKLFQERLKSAYKEKVSKDNTRKLFEELEAEEAAKREKEAKKLKQKEKAKERKRLQQLAKEEEKRKKEEEAKRIAEELHAKQEQLKLEQKKKKEEARLRREEEKKKKLEEIKRREAEHKRKVEEQIKHDEEQRRLKEERRKELEEKKRQKEEEKKQKELLKKQKEEEKERLRIEREKQLEKEAAVSKSIPQPSPKSKHVMKLAATFQSDIPSKQNQAQNGNQSHLPPQSRLRQDEENPQKTFANSVFSAKEYNSIYQPLPGSLSNNSSSAALSVGTQLSNFQALSHPQQQQQQYSNDIYLPSANLATATVQSPRSAPINLPNGTSAVGVSLANHLSLNNSSQGSPWTTNSTLSSNLGSTGLSHGQGQTVSGVNTNLPSSIGITSGGASQIFQPQPQPQLQPHQPQQQQQQQQQQQQQQQQNYFSPFNSFSEPLVGEPFQGIVHPTTNINNSTTASSSTGAIIPPMNPSGNIWNSNIGATATNAPASVSRNNSVWSNNAITPKPSEPSFLSTAGRSSSLWGTLANAPVASSSNNNSNATANYDNNNVRSLGSSSFAPANPGQHELEVIQTAIYNCFQMMQNSNQLEFNVAPLMAIFSNVRSLTNKTQLTVNQFLNCCVSNSLYQFDFVYDDFGTVTHLKVGLNGLNDHNSVNGFSKSSTTPPLLPISAMNSKILGYTQQQQQQQQPQPQPQSQQQYPLQHSHQQRLLQLFSNNQTILSQDVTSSAFATGTNTQGSSYGQVQLGAVSPAFARTSPPGLFPNDIPLLSTINELNSTPSTGTGTGTGSGVGAGTGAVFGSGIWN.

The segment covering 1-17 has biased composition (polar residues); the sequence is MSNRGNLNLNLPPSSGK. Disordered stretches follow at residues 1–155, 221–252, 442–494, 504–523, 681–734, 746–825, 871–1036, 1049–1075, 1176–1299, and 1512–1534; these read MSNR…EITN, HQASNNNHIHNHSHTSSHPLQHTPNHLHHASH, LKMN…SQQL, KNNLQQNHHTHHHHQQPLQH, KTPY…EIDD, QHHH…EEEK, AKRE…SKHV, SKQNQAQNGNQSHLPPQSRLRQDEENP, NSSQ…GAII, and YTQQQQQQQQPQPQPQSQQQYPL. Positions 24–33 are enriched in basic and acidic residues; the sequence is VHFELSKEKN. Composition is skewed to low complexity over residues 34 to 53 and 64 to 113; these read NSTNSNPHTSSTSTSNSNNT and NDNN…QQQS. The span at 124 to 134 shows a compositional bias: basic residues; it reads AKKRKKKKSKK. Residues 135 to 155 are compositionally biased toward low complexity; it reads SSNNNGNNSNTNSNSNSEITN. The segment covering 446 to 470 has biased composition (low complexity); sequence QRQQSQSQSQSQSQQQRDVQTAQSQ. The segment covering 471-487 has biased composition (polar residues); that stretch reads VLSKDSSLKNANTSMNK. A compositionally biased stretch (polar residues) spans 692-706; the sequence is PAATSQDREQQVQPN. Positions 717-734 are enriched in basic and acidic residues; the sequence is DHEHEHEHEHEHEHEIDD. Residues 754 to 808 are compositionally biased toward acidic residues; sequence EEYDEEDEEDDEEYEYGDDEEEEDEEDEEEGEDEELEEVVEDDVDEEILDDEEEF. Residues 855–1023 adopt a coiled-coil conformation; it reads KDNTRKLFEE…KQLEKEAAVS (169 aa). 2 stretches are compositionally biased toward basic and acidic residues: residues 871 to 887 and 896 to 1021; these read AKREKEAKKLKQKEKAK and AKEE…KEAA. A compositionally biased stretch (polar residues) spans 1049–1063; it reads SKQNQAQNGNQSHLP. The segment covering 1176-1199 has biased composition (low complexity); that stretch reads NSSQGSPWTTNSTLSSNLGSTGLS. Residues 1201 to 1228 show a composition bias toward polar residues; sequence GQGQTVSGVNTNLPSSIGITSGGASQIF. The span at 1234–1257 shows a compositional bias: low complexity; it reads PQLQPHQPQQQQQQQQQQQQQQQQ. Residues 1258-1267 are compositionally biased toward polar residues; it reads NYFSPFNSFS. Composition is skewed to low complexity over residues 1282-1299 and 1514-1534; these read TTNINNSTTASSSTGAII and QQQQQQQQPQPQPQSQQQYPL.

Belongs to the NST1 family.

It is found in the cytoplasm. Functionally, may act as a negative regulator of salt tolerance. This Lodderomyces elongisporus (strain ATCC 11503 / CBS 2605 / JCM 1781 / NBRC 1676 / NRRL YB-4239) (Yeast) protein is Stress response protein NST1 (NST1).